Here is a 427-residue protein sequence, read N- to C-terminus: Dihydrofolate synthetase (427 aa).

ATP is bound at residue Gly34–Ser37. Positions 123 and 153 each coordinate Mg(2+). Positions 275 and 296 each coordinate ATP.

The protein belongs to the folylpolyglutamate synthase family.

The protein resides in the cytoplasm. It catalyses the reaction 7,8-dihydropteroate + L-glutamate + ATP = 7,8-dihydrofolate + ADP + phosphate + H(+). It functions in the pathway cofactor biosynthesis; tetrahydrofolylpolyglutamate biosynthesis. Glutamate-adding enzyme which catalyzes the binding of the first glutamyl side chain to dihydropteroate. Leads to the de nove synthesis of tetrahydrofolate. In Saccharomyces cerevisiae (strain ATCC 204508 / S288c) (Baker's yeast), this protein is Dihydrofolate synthetase (FOL3).